We begin with the raw amino-acid sequence, 116 residues long: Fluoride-specific ion channel FluC 1 (116 aa).

The next 4 membrane-spanning stretches (helical) occupy residues 2-22 (LVLV…RYGI), 33-53 (PLPI…GWIL), 63-83 (IFLG…INEL), and 96-116 (WEYF…GTLI). Na(+) is bound by residues Gly-71 and Thr-74.

Belongs to the fluoride channel Fluc/FEX (TC 1.A.43) family.

Its subcellular location is the cell membrane. The catalysed reaction is fluoride(in) = fluoride(out). Its activity is regulated as follows. Na(+) is not transported, but it plays an essential structural role and its presence is essential for fluoride channel function. In terms of biological role, fluoride-specific ion channel. Important for reducing fluoride concentration in the cell, thus reducing its toxicity. The polypeptide is Fluoride-specific ion channel FluC 1 (Lactiplantibacillus plantarum (strain ATCC BAA-793 / NCIMB 8826 / WCFS1) (Lactobacillus plantarum)).